The primary structure comprises 476 residues: Protein Cep89 homolog (476 aa).

Disordered stretches follow at residues 1-29 (MSTRNVMITDLDQPDPNQQQHHQNPKKNR) and 172-193 (LGEGAPTCGGSTKVSSSSAPYP). The segment covering 180–190 (GGSTKVSSSSA) has biased composition (polar residues).

It localises to the cytoplasm. Its subcellular location is the cytosol. It is found in the mitochondrion intermembrane space. Its function is as follows. Required for mitochondrial complex IV activity. May be involved in non-associative learning. The polypeptide is Protein Cep89 homolog (Cep89) (Drosophila melanogaster (Fruit fly)).